Consider the following 439-residue polypeptide: Skin secretory protein xP2 (439 aa).

An N-terminal signal peptide occupies residues 1–22; the sequence is MNHKLFCVHFLLLILSVCYIQG. The tract at residues 25-351 is disordered; it reads AGGEPAPAEG…VEVGPKTEDC (327 aa). 5 repeat units span residues 26–33, 34–41, 42–51, 52–59, and 60–69. The interval 26 to 343 is 33 X approximate repeats of G-G(0,1)-[EV](0,1)-A-P-[A-P](1,3)-A-E; it reads GGEPAPAEGV…APAPAPAPVE (318 aa). Low complexity predominate over residues 26-345; sequence GGEPAPAEGV…APAPAPVEVG (320 aa). A 6; approximate repeat occupies 70–77; the sequence is GAEPAPAD. A run of 9 repeats spans residues 78–87, 88–97, 98–107, 108–115, 116–125, 126–135, 136–145, 146–153, and 154–163. Residues 164–173 form a 16; approximate repeat; the sequence is VEAPAPAPAE. Repeat copies occupy residues 174-183, 184-193, 194-203, 204-215, 216-225, 226-235, 236-245, 246-255, 256-265, 266-275, 276-285, 286-293, 294-303, and 304-313. Residues 314-321 form a 31; approximate repeat; sequence GGAPSPAE. A 32; approximate repeat occupies 322–331; the sequence is GGAPAAAPAE. Residues 332–343 form a 33; approximate repeat; it reads GGAPAPAPAPVE. P-type domains lie at 349-392 and 396-439; these read EDCK…FFPR and AQCL…FHQK. Disulfide bonds link Cys-351–Cys-377, Cys-361–Cys-376, Cys-371–Cys-388, Cys-398–Cys-424, Cys-408–Cys-423, and Cys-418–Cys-435.

Skin.

Its subcellular location is the secreted. May act as a growth factor in the germinal layer of the epidermis. May also be involved in growth of regenerating glands and in protection of the skin from the external environment. This Xenopus laevis (African clawed frog) protein is Skin secretory protein xP2 (p2).